A 619-amino-acid polypeptide reads, in one-letter code: Glucokinase regulatory protein (619 aa).

2 SIS domains span residues 90–283 (VQEV…AESN) and 319–498 (TATS…LRGK). 107–109 (CGT) contributes to the keto-D-fructose 6-phosphate binding site. Residues 109–110 (TS), E153, 179–181 (SCG), and E347 each bind beta-D-fructose 1-phosphate. Keto-D-fructose 6-phosphate-binding positions include 179–183 (SCGLS) and E347. Positions 462 to 464 (ILF) are essential for interaction with GCK. Keto-D-fructose 6-phosphate is bound at residue K513. K513 contacts beta-D-fructose 1-phosphate.

This sequence belongs to the GCKR family. Interacts (fructose 6-phosphate bound form) with gck.

It is found in the nucleus. Its subcellular location is the cytoplasm. It localises to the mitochondrion. Its function is as follows. Regulates glucokinase (gck) by forming an inactive complex with this enzyme. The affinity of gckr for gck is modulated by fructose metabolites: gckr with bound fructose 6-phosphate has increased affinity for gck, while gckr with bound fructose 1-phosphate has strongly decreased affinity for gck and does not inhibit gck activity. This chain is Glucokinase regulatory protein, found in Xenopus laevis (African clawed frog).